Consider the following 527-residue polypeptide: DNA polymerase epsilon subunit 2 (527 aa).

Belongs to the DNA polymerase epsilon subunit B family. As to quaternary structure, component of the DNA polymerase epsilon complex consisting of four subunits: the catalytic subunit POLE and the accessory subunits POLE2, POLE3 and POLE4.

The protein localises to the nucleus. In terms of biological role, accessory component of the DNA polymerase epsilon complex. Participates in DNA repair and in chromosomal DNA replication. This Bos taurus (Bovine) protein is DNA polymerase epsilon subunit 2 (POLE2).